The following is a 63-amino-acid chain: Beta-defensin 35 (63 aa).

A signal peptide spans Met1 to Gly23. Cystine bridges form between Cys31/Cys58, Cys38/Cys52, and Cys42/Cys59.

The protein belongs to the beta-defensin family. As to expression, expressed in testis, epididymis (caput, corpus and cauda), kidney and neonatal and adult brain.

Its subcellular location is the secreted. In terms of biological role, has antibacterial activity. The polypeptide is Beta-defensin 35 (Defb35) (Mus musculus (Mouse)).